The sequence spans 347 residues: Glucose 1-dehydrogenase (347 aa).

Cysteine 39 contributes to the Zn(2+) binding site. Threonine 41 contributes to the substrate binding site. Residues histidine 64 and glutamate 65 each coordinate Zn(2+). 2 residues coordinate substrate: glutamate 110 and glutamate 146. A Zn(2+)-binding site is contributed by glutamate 146. Residues 178–181 (AGPV), 260–262 (LGV), and 289–291 (SVN) each bind NADP(+). Asparagine 291 provides a ligand contact to substrate.

It belongs to the zinc-containing alcohol dehydrogenase family. Glucose 1-dehydrogenase subfamily. In terms of assembly, homodimer. It depends on Zn(2+) as a cofactor.

The enzyme catalyses D-glucose + NAD(+) = D-glucono-1,5-lactone + NADH + H(+). The catalysed reaction is D-glucose + NADP(+) = D-glucono-1,5-lactone + NADPH + H(+). Its function is as follows. Catalyzes the NAD(P)(+)-dependent oxidation of D-glucose to D-gluconate via gluconolactone. To a lesser extent, is also active with xylose as substrate, but mannose, arabinose, galactose, fructose 6-phosphate, glucose 6-phosphate, glycerinaldehyde 3-phosphate, ribose, sorbitol, ethanol, erythritol, or lactose are not oxidized by the enzyme. Can utilize both NAD(+) and NADP(+) as electron acceptor, with a marked preference for NADP(+). Is involved in the degradation of glucose through a non-phosphorylative variant of the Entner-Doudoroff pathway. The polypeptide is Glucose 1-dehydrogenase (gdh) (Thermoproteus tenax (strain ATCC 35583 / DSM 2078 / JCM 9277 / NBRC 100435 / Kra 1)).